The chain runs to 348 residues: GTP 3',8-cyclase (348 aa).

One can recognise a Radical SAM core domain in the interval 24–248 (PFGRAVTYLR…TDIDYQTGGP (225 aa)). Arg33 is a GTP binding site. [4Fe-4S] cluster contacts are provided by Cys40 and Cys44. Tyr46 contributes to the S-adenosyl-L-methionine binding site. [4Fe-4S] cluster is bound at residue Cys47. A GTP-binding site is contributed by Arg82. Gly86 provides a ligand contact to S-adenosyl-L-methionine. Thr115 is a GTP binding site. Ser139 provides a ligand contact to S-adenosyl-L-methionine. Residue Lys175 coordinates GTP. Residue Met209 participates in S-adenosyl-L-methionine binding. Residues Cys272 and Cys275 each coordinate [4Fe-4S] cluster. 277–279 (RVR) contacts GTP. Position 289 (Cys289) interacts with [4Fe-4S] cluster.

The protein belongs to the radical SAM superfamily. MoaA family. Monomer and homodimer. [4Fe-4S] cluster serves as cofactor.

The catalysed reaction is GTP + AH2 + S-adenosyl-L-methionine = (8S)-3',8-cyclo-7,8-dihydroguanosine 5'-triphosphate + 5'-deoxyadenosine + L-methionine + A + H(+). It functions in the pathway cofactor biosynthesis; molybdopterin biosynthesis. Functionally, catalyzes the cyclization of GTP to (8S)-3',8-cyclo-7,8-dihydroguanosine 5'-triphosphate. This Rhizobium etli (strain ATCC 51251 / DSM 11541 / JCM 21823 / NBRC 15573 / CFN 42) protein is GTP 3',8-cyclase.